The following is a 158-amino-acid chain: uncharacterized protein (158 aa).

The disordered stretch occupies residues 1 to 26 (MRASRSPPSPRRCHHHHEATGAASGA).

This is an uncharacterized protein from Homo sapiens (Human).